The sequence spans 159 residues: NADH-quinone oxidoreductase subunit B (159 aa).

[4Fe-4S] cluster is bound by residues Cys-37, Cys-38, Cys-102, and Cys-132.

The protein belongs to the complex I 20 kDa subunit family. NDH-1 is composed of 14 different subunits. Subunits NuoB, C, D, E, F, and G constitute the peripheral sector of the complex. [4Fe-4S] cluster is required as a cofactor.

The protein resides in the cell inner membrane. The catalysed reaction is a quinone + NADH + 5 H(+)(in) = a quinol + NAD(+) + 4 H(+)(out). Functionally, NDH-1 shuttles electrons from NADH, via FMN and iron-sulfur (Fe-S) centers, to quinones in the respiratory chain. Couples the redox reaction to proton translocation (for every two electrons transferred, four hydrogen ions are translocated across the cytoplasmic membrane), and thus conserves the redox energy in a proton gradient. The protein is NADH-quinone oxidoreductase subunit B of Ruthia magnifica subsp. Calyptogena magnifica.